We begin with the raw amino-acid sequence, 100 residues long: Large ribosomal subunit protein bL21 (100 aa).

The protein belongs to the bacterial ribosomal protein bL21 family. Part of the 50S ribosomal subunit. Contacts protein L20.

Functionally, this protein binds to 23S rRNA in the presence of protein L20. The protein is Large ribosomal subunit protein bL21 of Mycoplasma capricolum subsp. capricolum (strain California kid / ATCC 27343 / NCTC 10154).